The chain runs to 2260 residues: Reducing polyketide synthase pksF (2260 aa).

Residues 20-445 (VEPIAIVGFG…GTNAHVVLDD (426 aa)) enclose the Ketosynthase family 3 (KS3) domain. Active-site for beta-ketoacyl synthase activity residues include cysteine 194, histidine 329, and histidine 368. Residues 598–933 (FVFTGQGAQW…ECAGKLHTIG (336 aa)) form a malonyl-CoA:ACP transacylase (MAT) domain region. The For malonyltransferase activity role is filled by serine 689. Positions 984–1121 (HELLGSRTPD…GYVAIEYDDR (138 aa)) are N-terminal hotdog fold. Residues 984 to 1281 (HELLGSRTPD…FRNKLFSITA (298 aa)) form a dehydratase (DH) domain region. One can recognise a PKS/mFAS DH domain in the interval 984–1306 (HELLGSRTPD…TSTIGRNSPS (323 aa)). Histidine 1016 acts as the Proton acceptor; for dehydratase activity in catalysis. Residues 1150–1306 (RIAIDSADIY…TSTIGRNSPS (157 aa)) are C-terminal hotdog fold. Catalysis depends on aspartate 1216, which acts as the Proton donor; for dehydratase activity. The enoylreductase (ER) domain stretch occupies residues 1544 to 1859 (GILKTLHYEQ…DVDVVEKIVI (316 aa)). A ketoreductase (KR) domain region spans residues 1882 to 2104 (PDASYLIAGA…LRFCCDPDRV (223 aa)). The region spanning 2174 to 2251 (QATDIVVEAI…LLAVKVAGKS (78 aa)) is the Carrier domain. Serine 2211 carries the post-translational modification O-(pantetheine 4'-phosphoryl)serine.

Requires pantetheine 4'-phosphate as cofactor.

In terms of biological role, reducing polyketide synthase that catalyzes the formation of a C22 intermediate attached to the ACP. Release by intramolecular hydrolysis by the enolized delta-carbonyl would give the pyrone product aslanipyrone. Alternatively, KR-mediated reduction of the beta-carbonyl of the C22 intermediate would form a beta-hydroxy thioester intermediate, which could be a substrate for a further KS-mediated condensation of an additional C2 unit to form a C24 intermediate, which cyclizes by aldol condensation followed by decarboxylation to form aslaniol. Neither aslanipyrone, aslaniol, nor their derivatives have been detected in A.solani, probably due to a low abundance and/or extensive post-PKS modification. It is assumed that the branching point from C22 to C24 is the result of KR activity on the C22 intermediate anchored to the ACP. This is Reducing polyketide synthase pksF from Alternaria solani.